Here is a 403-residue protein sequence, read N- to C-terminus: Argininosuccinate synthase (403 aa).

ATP contacts are provided by residues 13-21 and A40; that span reads AYSGGLDTS. 2 residues coordinate L-citrulline: Y91 and S96. Residue G121 coordinates ATP. The L-aspartate site is built by T123, N127, and D128. N127 contributes to the L-citrulline binding site. L-citrulline-binding residues include R131, S180, S189, E265, and Y277.

The protein belongs to the argininosuccinate synthase family. Type 1 subfamily. In terms of assembly, homotetramer.

Its subcellular location is the cytoplasm. The catalysed reaction is L-citrulline + L-aspartate + ATP = 2-(N(omega)-L-arginino)succinate + AMP + diphosphate + H(+). It functions in the pathway amino-acid biosynthesis; L-arginine biosynthesis; L-arginine from L-ornithine and carbamoyl phosphate: step 2/3. The chain is Argininosuccinate synthase from Leptospira interrogans serogroup Icterohaemorrhagiae serovar copenhageni (strain Fiocruz L1-130).